Consider the following 174-residue polypeptide: 3-hydroxydecanoyl-[acyl-carrier-protein] dehydratase (174 aa).

The active site involves His71.

It belongs to the thioester dehydratase family. FabA subfamily. Homodimer.

The protein localises to the cytoplasm. The catalysed reaction is a (3R)-hydroxyacyl-[ACP] = a (2E)-enoyl-[ACP] + H2O. The enzyme catalyses (3R)-hydroxydecanoyl-[ACP] = (2E)-decenoyl-[ACP] + H2O. It carries out the reaction (2E)-decenoyl-[ACP] = (3Z)-decenoyl-[ACP]. It participates in lipid metabolism; fatty acid biosynthesis. In terms of biological role, necessary for the introduction of cis unsaturation into fatty acids. Catalyzes the dehydration of (3R)-3-hydroxydecanoyl-ACP to E-(2)-decenoyl-ACP and then its isomerization to Z-(3)-decenoyl-ACP. Can catalyze the dehydratase reaction for beta-hydroxyacyl-ACPs with saturated chain lengths up to 16:0, being most active on intermediate chain length. The sequence is that of 3-hydroxydecanoyl-[acyl-carrier-protein] dehydratase from Nitrobacter hamburgensis (strain DSM 10229 / NCIMB 13809 / X14).